The chain runs to 742 residues: Glycine--tRNA ligase (742 aa).

In terms of domain architecture, WHEP-TRS spans lysine 73–phenylalanine 129. Position 309 (glutamate 309) interacts with glycine. ATP-binding positions include arginine 341 to glutamate 343 and arginine 352 to valine 353. Glutamate 360 is a binding site for glycine. An ATP-binding site is contributed by glutamate 467–cysteine 468. Residue glutamate 586 to serine 588 coordinates glycine. Position 593 (arginine 593) interacts with ATP.

It belongs to the class-II aminoacyl-tRNA synthetase family. As to quaternary structure, homodimer.

It is found in the cytoplasm. It localises to the cell projection. The protein localises to the axon. The protein resides in the secreted. Its subcellular location is the extracellular exosome. The enzyme catalyses tRNA(Gly) + glycine + ATP = glycyl-tRNA(Gly) + AMP + diphosphate. It carries out the reaction 2 ATP + H(+) = P(1),P(4)-bis(5'-adenosyl) tetraphosphate + diphosphate. Catalyzes the ATP-dependent ligation of glycine to the 3'-end of its cognate tRNA, via the formation of an aminoacyl-adenylate intermediate (Gly-AMP). Also produces diadenosine tetraphosphate (Ap4A), a universal pleiotropic signaling molecule needed for cell regulation pathways, by direct condensation of 2 ATPs. Thereby, may play a special role in Ap4A homeostasis. The sequence is that of Glycine--tRNA ligase from Caenorhabditis elegans.